Here is a 329-residue protein sequence, read N- to C-terminus: Ketol-acid reductoisomerase (NADP(+)) (329 aa).

A KARI N-terminal Rossmann domain is found at 2-182 (TQLFYDTDAD…GGTRAGILET (181 aa)). NADP(+)-binding positions include 25-28 (YGSQ), Ser51, Ser53, and 83-86 (DEFQ). His108 is a catalytic residue. NADP(+) is bound at residue Gly134. Positions 183-328 (NFKEETETDL…KGLRSMFSWL (146 aa)) constitute a KARI C-terminal knotted domain. Positions 191, 195, 227, and 231 each coordinate Mg(2+). Position 252 (Ser252) interacts with substrate.

Belongs to the ketol-acid reductoisomerase family. Mg(2+) is required as a cofactor.

The catalysed reaction is (2R)-2,3-dihydroxy-3-methylbutanoate + NADP(+) = (2S)-2-acetolactate + NADPH + H(+). It carries out the reaction (2R,3R)-2,3-dihydroxy-3-methylpentanoate + NADP(+) = (S)-2-ethyl-2-hydroxy-3-oxobutanoate + NADPH + H(+). It participates in amino-acid biosynthesis; L-isoleucine biosynthesis; L-isoleucine from 2-oxobutanoate: step 2/4. It functions in the pathway amino-acid biosynthesis; L-valine biosynthesis; L-valine from pyruvate: step 2/4. Involved in the biosynthesis of branched-chain amino acids (BCAA). Catalyzes an alkyl-migration followed by a ketol-acid reduction of (S)-2-acetolactate (S2AL) to yield (R)-2,3-dihydroxy-isovalerate. In the isomerase reaction, S2AL is rearranged via a Mg-dependent methyl migration to produce 3-hydroxy-3-methyl-2-ketobutyrate (HMKB). In the reductase reaction, this 2-ketoacid undergoes a metal-dependent reduction by NADPH to yield (R)-2,3-dihydroxy-isovalerate. This chain is Ketol-acid reductoisomerase (NADP(+)), found in Prochlorococcus marinus (strain AS9601).